We begin with the raw amino-acid sequence, 217 residues long: GRB2-related adapter protein (217 aa).

Residues 1 to 58 enclose the SH3 1 domain; sequence MESVALYSFQATESDELAFNKGDTLKILNMEDDQNWYKAELRGAEGFVPKNYIRLKPH. One can recognise an SH2 domain in the interval 60 to 152; it reads WYSGRISRQL…KRQVFLQDEE (93 aa). Residues 158-217 form the SH3 2 domain; the sequence is PRACFAQAQFDFSAQDPSQLSFRRGDIIEVLERLDPSWWRGRLSGRIGFFPRSYVQPVHM.

It belongs to the GRB2/sem-5/DRK family. In terms of assembly, associates through its SH2 domain with ligand-activated receptors for stem cell factor (KIT) and erythropoietin (EPOR). Also forms a stable complex with the Bcr-Abl oncoprotein. GRAP is associated with the Ras guanine nucleotide exchange factor SOS1, primarily through its N-terminal SH3 domain. Interacts with phosphorylated LAT upon TCR activation. Interacts with SHB.

It localises to the membrane. The protein localises to the synapse. Functionally, couples signals from receptor and cytoplasmic tyrosine kinases to the Ras signaling pathway. Plays a role in the inner ear and in hearing. The sequence is that of GRB2-related adapter protein (GRAP) from Bos taurus (Bovine).